The following is a 172-amino-acid chain: 3-hydroxydecanoyl-[acyl-carrier-protein] dehydratase (172 aa).

His-71 is an active-site residue.

It belongs to the thioester dehydratase family. FabA subfamily. As to quaternary structure, homodimer.

The protein resides in the cytoplasm. The catalysed reaction is a (3R)-hydroxyacyl-[ACP] = a (2E)-enoyl-[ACP] + H2O. The enzyme catalyses (3R)-hydroxydecanoyl-[ACP] = (2E)-decenoyl-[ACP] + H2O. It catalyses the reaction (2E)-decenoyl-[ACP] = (3Z)-decenoyl-[ACP]. Its pathway is lipid metabolism; fatty acid biosynthesis. In terms of biological role, necessary for the introduction of cis unsaturation into fatty acids. Catalyzes the dehydration of (3R)-3-hydroxydecanoyl-ACP to E-(2)-decenoyl-ACP and then its isomerization to Z-(3)-decenoyl-ACP. Can catalyze the dehydratase reaction for beta-hydroxyacyl-ACPs with saturated chain lengths up to 16:0, being most active on intermediate chain length. The protein is 3-hydroxydecanoyl-[acyl-carrier-protein] dehydratase of Yersinia enterocolitica serotype O:8 / biotype 1B (strain NCTC 13174 / 8081).